The chain runs to 371 residues: UPF0284 protein tll2306 (371 aa).

Belongs to the UPF0284 family.

The sequence is that of UPF0284 protein tll2306 from Thermosynechococcus vestitus (strain NIES-2133 / IAM M-273 / BP-1).